The sequence spans 20 residues: Pregnancy-associated glycoprotein 67A (20 aa).

N-linked (GlcNAc...) asparagine glycosylation is found at Asn4 and Asn20.

The protein belongs to the peptidase A1 family. As to expression, chorionic epithelium (trophectoderm) and placental cotyledons.

The protein localises to the secreted. The protein resides in the extracellular space. The protein is Pregnancy-associated glycoprotein 67A of Bison bonasus (European bison).